A 363-amino-acid chain; its full sequence is Adenosine 3'-phospho 5'-phosphosulfate transporter 2 (363 aa).

A run of 10 helical transmembrane segments spans residues 39–59 (WLQFVLLSGAIFILYLGYGYM), 63–83 (IFKLPGMKPFGWTLTLIQFVI), 106–126 (IYGVIAFFTVATMGLSNASVG), 131–151 (PTQVIFKCCKLIPVLIGGILI), 157–177 (GWIDISAAILMSLGIIMFTLA), 187–206 (SRGYIMISGALLADAVIGNI), 231–251 (VFIFTYVVLSGEIFSAIPFFL), 257–277 (TFGYALIFSFLGYLGVNVVLT), 281–301 (VFGALVAVTVTTLRKALTIIL), and 310–330 (FTIEYVYAGSVVMLAIYLNLY).

The protein belongs to the nucleotide-sugar transporter family. SLC35B subfamily.

It is found in the golgi apparatus membrane. In terms of biological role, mediates the transport of adenosine 3'-phospho 5'-phosphosulfate (PAPS), from cytosol into Golgi. PAPS is a universal sulfuryl donor for sulfation events that take place in the Golgi. This chain is Adenosine 3'-phospho 5'-phosphosulfate transporter 2 (pst-2), found in Caenorhabditis briggsae.